The chain runs to 221 residues: Small ribosomal subunit protein eS8 (221 aa).

Disordered regions lie at residues 1–41 (MGIS…LSSN) and 128–169 (TPAA…TLDP). The span at 8 to 26 (MHKRRATGGKQKAWRKKRK) shows a compositional bias: basic residues. A compositionally biased stretch (basic and acidic residues) spans 146–169 (EETKKSNHVTRKLEKRKEGRTLDP).

The protein belongs to the eukaryotic ribosomal protein eS8 family.

The polypeptide is Small ribosomal subunit protein eS8 (RPS8) (Zea mays (Maize)).